Here is a 216-residue protein sequence, read N- to C-terminus: MTQDSRFPNLFILDHPLIQHKLSHMRDRDTSTRTFRELLREITLLMGYEITRNLPMTTRRLTTPLVEIDAPVIAGKKLAIVPVLRAGIGMSDGLLELVPSARVGHIGVYRAEDHRPVEYLVRLPDLEDRVFILCDPMVATGYSAVHAVDVLKRRNVAGENILFLALVAAPEGVQVFQDAHPDVKLYVASLDSHLNEHAYIVPGLGDAGDRLFGTKN.

Residues R85, R110, and 135–143 each bind 5-phospho-alpha-D-ribose 1-diphosphate; that span reads DPMVATGYS. Uracil-binding positions include I200 and 205 to 207; that span reads GDA. 5-phospho-alpha-D-ribose 1-diphosphate is bound at residue D206.

This sequence belongs to the UPRTase family. Mg(2+) is required as a cofactor.

It carries out the reaction UMP + diphosphate = 5-phospho-alpha-D-ribose 1-diphosphate + uracil. It participates in pyrimidine metabolism; UMP biosynthesis via salvage pathway; UMP from uracil: step 1/1. With respect to regulation, allosterically activated by GTP. Catalyzes the conversion of uracil and 5-phospho-alpha-D-ribose 1-diphosphate (PRPP) to UMP and diphosphate. The sequence is that of Uracil phosphoribosyltransferase from Paraburkholderia xenovorans (strain LB400).